Reading from the N-terminus, the 371-residue chain is MKLVFAGGGTGGHLYPALAIAQSWKESHPNDEILFVGTPRGIENTVVPKYGFPLYLLPVEGIPRKVSWETLKKLFLVPKSLINAFIFLKKEKPDIVVGTGGYASFPVVFAATVLKIPTVIHEQNAYPGIANKILAARVDAVCLTFGEAKKRMKAKNLYETGLPVRREFFTNAANRNELRKKMGVGKDELLLVAFGGSQGALTINKVVGYLLPEIMLRPNLRLVWATGPRNYENLKQKYKNLPERVQMVPYIDNMPEVLPAADLAITRAGAATLAEIAASKVPAVLIPYPYAAENHQEHNARAFVSHGAAVLLRDAECSEDRVKATILPLLDSPEKLVKMAENAGKVLRRDSLKEITGIMEALLKPKSNKKT.

UDP-N-acetyl-alpha-D-glucosamine-binding positions include 10–12 (TGG), Asn-124, Arg-165, Ser-197, Ile-251, and Gln-296.

This sequence belongs to the glycosyltransferase 28 family. MurG subfamily.

The protein resides in the cell membrane. It carries out the reaction di-trans,octa-cis-undecaprenyl diphospho-N-acetyl-alpha-D-muramoyl-L-alanyl-D-glutamyl-meso-2,6-diaminopimeloyl-D-alanyl-D-alanine + UDP-N-acetyl-alpha-D-glucosamine = di-trans,octa-cis-undecaprenyl diphospho-[N-acetyl-alpha-D-glucosaminyl-(1-&gt;4)]-N-acetyl-alpha-D-muramoyl-L-alanyl-D-glutamyl-meso-2,6-diaminopimeloyl-D-alanyl-D-alanine + UDP + H(+). It participates in cell wall biogenesis; peptidoglycan biosynthesis. Functionally, cell wall formation. Catalyzes the transfer of a GlcNAc subunit on undecaprenyl-pyrophosphoryl-MurNAc-pentapeptide (lipid intermediate I) to form undecaprenyl-pyrophosphoryl-MurNAc-(pentapeptide)GlcNAc (lipid intermediate II). This Carboxydothermus hydrogenoformans (strain ATCC BAA-161 / DSM 6008 / Z-2901) protein is UDP-N-acetylglucosamine--N-acetylmuramyl-(pentapeptide) pyrophosphoryl-undecaprenol N-acetylglucosamine transferase.